A 236-amino-acid chain; its full sequence is Protein N-lysine methyltransferase METTL21A (236 aa).

S-adenosyl-L-methionine is bound by residues W47, G73 to G75, D112, W143, and A161.

It belongs to the methyltransferase superfamily. METTL21 family. In terms of assembly, interacts with heat shock 70 family members; at least some of these proteins are methylation substrates.

It is found in the cytoplasm. The catalysed reaction is L-lysyl-[protein] + 3 S-adenosyl-L-methionine = N(6),N(6),N(6)-trimethyl-L-lysyl-[protein] + 3 S-adenosyl-L-homocysteine + 3 H(+). Protein-lysine methyltransferase that selectively trimethylates residues in heat shock protein 70 (HSP70) family members. Contributes to the in vivo trimethylation of Lys residues in HSPA1 and HSPA8. In vitro methylates 'Lys-561' in HSPA1, 'Lys-564' in HSPA2, 'Lys-585' in HSPA5, 'Lys-563' in HSPA6 and 'Lys-561' in HSPA8. The polypeptide is Protein N-lysine methyltransferase METTL21A (METTL21A) (Pongo abelii (Sumatran orangutan)).